The following is a 330-amino-acid chain: Ferredoxin--NADP reductase (330 aa).

Glu34, Gln42, Tyr47, Val87, Phe121, Asp285, and Ser325 together coordinate FAD.

It belongs to the ferredoxin--NADP reductase type 2 family. Homodimer. The cofactor is FAD.

The enzyme catalyses 2 reduced [2Fe-2S]-[ferredoxin] + NADP(+) + H(+) = 2 oxidized [2Fe-2S]-[ferredoxin] + NADPH. This chain is Ferredoxin--NADP reductase, found in Limosilactobacillus fermentum (strain NBRC 3956 / LMG 18251) (Lactobacillus fermentum).